The primary structure comprises 127 residues: Protein ApaG (127 aa).

Residues 3–127 (DDPRYRVEVE…FVLSVPRTLH (125 aa)) form the ApaG domain.

In Xanthomonas oryzae pv. oryzae (strain MAFF 311018), this protein is Protein ApaG.